The sequence spans 391 residues: ETS-related transcription factor Elf-3 (391 aa).

Residues 65-151 (DPLAVLHLAE…AQLRDLTSNS (87 aa)) enclose the PNT domain. The tract at residues 200–271 (YCSTYGPGAP…HGKRKRGRPR (72 aa)) is disordered. Residues 211 to 229 (PGSSDVSTARTATPQSSHA) show a composition bias toward polar residues. A compositionally biased stretch (basic and acidic residues) spans 242–261 (TESKVFPRDGFPDYKKGEPK). Residues 262–271 (HGKRKRGRPR) are compositionally biased toward basic residues. The segment at residues 293–375 (THLWEFIRDI…DGRRLVYKFG (83 aa)) is a DNA-binding region (ETS).

It belongs to the ETS family. Interacts with TBP. Interacts with CREBBP and EP300; these act as transcriptional coactivators of ELF3 and positively modulate its function. Interacts with XRCC5/KU86 and XRCC6/KU70; these inhibit the ability of ELF3 to bind DNA and negatively modulate its transcriptional activity. Associated with CLND7 and POU2F3. Interacts with ZNF768. As to expression, expressed in small intestine, colon, lung, kidney and uterus. Also expressed in the corneal epithelium and conjunctiva of the developing and adult eye. Not detected in liver, spleen, thymus, brain, heart, skeletal muscle or ovary.

The protein localises to the cytoplasm. It localises to the nucleus. Functionally, transcriptional activator that binds and transactivates ETS sequences containing the consensus nucleotide core sequence GGA[AT]. Acts synergistically with POU2F3 to transactivate the SPRR2A promoter and with RUNX1 to transactivate the ANGPT1 promoter. Also transactivates collagenase, CCL20, CLND7, FLG, KRT8, NOS2, PTGS2, SPRR2B, TGFBR2 and TGM3 promoters. Represses KRT4 promoter activity. Involved in mediating vascular inflammation. May play an important role in epithelial cell differentiation and tumorigenesis. May be a critical downstream effector of the ERBB2 signaling pathway. May be associated with mammary gland development and involution. Plays an important role in the regulation of transcription with TATA-less promoters in preimplantation embryos, which is essential in preimplantation development. The chain is ETS-related transcription factor Elf-3 from Mus musculus (Mouse).